The sequence spans 656 residues: Chaperone protein DnaK (656 aa).

Disordered stretches follow at residues 488–532 (EMQE…DAVD) and 579–656 (YQQQ…DEDE). The segment covering 492–513 (EAEKHAEEDEKRRERIEARNEA) has biased composition (basic and acidic residues). The segment covering 523–532 (LLDENEDAVD) has biased composition (acidic residues). Positions 584–635 (GEGGAGAGAGAAGGMGGAGPGGMGGAGPGGMGGAGPGGMGGAGPGAGAGQQG) are enriched in gly residues. Residues 636–656 (DGEEFVDADFEDVDDEDDEDE) are compositionally biased toward acidic residues.

The protein belongs to the heat shock protein 70 family.

Its function is as follows. Acts as a chaperone. The protein is Chaperone protein DnaK of Natronomonas pharaonis (strain ATCC 35678 / DSM 2160 / CIP 103997 / JCM 8858 / NBRC 14720 / NCIMB 2260 / Gabara) (Halobacterium pharaonis).